The following is a 372-amino-acid chain: Pyrimidine monooxygenase RutA (372 aa).

FMN contacts are provided by residues 57 to 58 (IK), asparagine 123, glutamate 132, 148 to 149 (RY), and serine 198.

It belongs to the NtaA/SnaA/DszA monooxygenase family. RutA subfamily.

The enzyme catalyses uracil + FMNH2 + NADH + O2 = (Z)-3-ureidoacrylate + FMN + NAD(+) + H2O + H(+). The catalysed reaction is thymine + FMNH2 + NADH + O2 = (Z)-2-methylureidoacrylate + FMN + NAD(+) + H2O + H(+). In terms of biological role, catalyzes the pyrimidine ring opening between N-3 and C-4 by an unusual flavin hydroperoxide-catalyzed mechanism, adding oxygen atoms in the process to yield ureidoacrylate peracid, that immediately reacts with FMN forming ureidoacrylate and FMN-N(5)-oxide. The FMN-N(5)-oxide reacts spontaneously with NADH to produce FMN. Requires the flavin reductase RutF to regenerate FMN in vivo. The protein is Pyrimidine monooxygenase RutA of Methylorubrum extorquens (strain PA1) (Methylobacterium extorquens).